Consider the following 417-residue polypeptide: Gamma-glutamyl phosphate reductase (417 aa).

This sequence belongs to the gamma-glutamyl phosphate reductase family.

It localises to the cytoplasm. It catalyses the reaction L-glutamate 5-semialdehyde + phosphate + NADP(+) = L-glutamyl 5-phosphate + NADPH + H(+). It functions in the pathway amino-acid biosynthesis; L-proline biosynthesis; L-glutamate 5-semialdehyde from L-glutamate: step 2/2. Its function is as follows. Catalyzes the NADPH-dependent reduction of L-glutamate 5-phosphate into L-glutamate 5-semialdehyde and phosphate. The product spontaneously undergoes cyclization to form 1-pyrroline-5-carboxylate. The polypeptide is Gamma-glutamyl phosphate reductase (Desulfitobacterium hafniense (strain DSM 10664 / DCB-2)).